We begin with the raw amino-acid sequence, 737 residues long: Polyribonucleotide nucleotidyltransferase (737 aa).

Mg(2+) is bound by residues aspartate 489 and aspartate 495. The KH domain occupies proline 556–isoleucine 615. Residues aspartate 625–lysine 693 enclose the S1 motif domain. Residues serine 691–glutamate 737 are disordered. The segment covering proline 700 to proline 714 has biased composition (basic and acidic residues). The span at histidine 715–lysine 724 shows a compositional bias: basic residues. Positions proline 725–glutamate 737 are enriched in basic and acidic residues.

This sequence belongs to the polyribonucleotide nucleotidyltransferase family. The cofactor is Mg(2+).

The protein resides in the cytoplasm. It carries out the reaction RNA(n+1) + phosphate = RNA(n) + a ribonucleoside 5'-diphosphate. Functionally, involved in mRNA degradation. Catalyzes the phosphorolysis of single-stranded polyribonucleotides processively in the 3'- to 5'-direction. This Streptococcus pneumoniae (strain Taiwan19F-14) protein is Polyribonucleotide nucleotidyltransferase.